Reading from the N-terminus, the 218-residue chain is Pyridoxine/pyridoxamine 5'-phosphate oxidase (218 aa).

Substrate-binding positions include 14 to 17 and K72; that span reads RREY. Residues 67 to 72, 82 to 83, R88, K89, and Q111 contribute to the FMN site; these read RIVLLK and YT. Y129, R133, and S137 together coordinate substrate. FMN contacts are provided by residues 146–147 and W191; that span reads QS. 197–199 serves as a coordination point for substrate; it reads RLH. Position 201 (R201) interacts with FMN.

This sequence belongs to the pyridoxamine 5'-phosphate oxidase family. As to quaternary structure, homodimer. Requires FMN as cofactor.

The catalysed reaction is pyridoxamine 5'-phosphate + O2 + H2O = pyridoxal 5'-phosphate + H2O2 + NH4(+). The enzyme catalyses pyridoxine 5'-phosphate + O2 = pyridoxal 5'-phosphate + H2O2. Its pathway is cofactor metabolism; pyridoxal 5'-phosphate salvage; pyridoxal 5'-phosphate from pyridoxamine 5'-phosphate: step 1/1. The protein operates within cofactor metabolism; pyridoxal 5'-phosphate salvage; pyridoxal 5'-phosphate from pyridoxine 5'-phosphate: step 1/1. In terms of biological role, catalyzes the oxidation of either pyridoxine 5'-phosphate (PNP) or pyridoxamine 5'-phosphate (PMP) into pyridoxal 5'-phosphate (PLP). The protein is Pyridoxine/pyridoxamine 5'-phosphate oxidase of Escherichia coli O45:K1 (strain S88 / ExPEC).